Reading from the N-terminus, the 423-residue chain is Gamma-glutamyl phosphate reductase 2 (423 aa).

It belongs to the gamma-glutamyl phosphate reductase family.

Its subcellular location is the cytoplasm. It carries out the reaction L-glutamate 5-semialdehyde + phosphate + NADP(+) = L-glutamyl 5-phosphate + NADPH + H(+). It participates in amino-acid biosynthesis; L-proline biosynthesis; L-glutamate 5-semialdehyde from L-glutamate: step 2/2. In terms of biological role, catalyzes the NADPH-dependent reduction of L-glutamate 5-phosphate into L-glutamate 5-semialdehyde and phosphate. The product spontaneously undergoes cyclization to form 1-pyrroline-5-carboxylate. In Bacillus licheniformis (strain ATCC 14580 / DSM 13 / JCM 2505 / CCUG 7422 / NBRC 12200 / NCIMB 9375 / NCTC 10341 / NRRL NRS-1264 / Gibson 46), this protein is Gamma-glutamyl phosphate reductase 2.